Consider the following 898-residue polypeptide: Alanine--tRNA ligase (898 aa).

Positions 584, 588, 686, and 690 each coordinate Zn(2+).

The protein belongs to the class-II aminoacyl-tRNA synthetase family. The cofactor is Zn(2+).

The protein localises to the cytoplasm. It carries out the reaction tRNA(Ala) + L-alanine + ATP = L-alanyl-tRNA(Ala) + AMP + diphosphate. Its function is as follows. Catalyzes the attachment of alanine to tRNA(Ala) in a two-step reaction: alanine is first activated by ATP to form Ala-AMP and then transferred to the acceptor end of tRNA(Ala). Also edits incorrectly charged Ser-tRNA(Ala) and Gly-tRNA(Ala) via its editing domain. The sequence is that of Alanine--tRNA ligase from Myxococcus xanthus (strain DK1622).